The chain runs to 674 residues: DNA ligase (674 aa).

Residues 34–38 (DFEFD), 83–84 (SL), and glutamate 117 each bind NAD(+). Catalysis depends on lysine 119, which acts as the N6-AMP-lysine intermediate. NAD(+)-binding residues include arginine 140, glutamate 184, lysine 297, and lysine 321. Residues cysteine 415, cysteine 418, cysteine 433, and cysteine 439 each coordinate Zn(2+). In terms of domain architecture, BRCT spans 598 to 674 (LVNTNFEGQS…IDEDEFERML (77 aa)).

Belongs to the NAD-dependent DNA ligase family. LigA subfamily. Mg(2+) serves as cofactor. It depends on Mn(2+) as a cofactor.

It carries out the reaction NAD(+) + (deoxyribonucleotide)n-3'-hydroxyl + 5'-phospho-(deoxyribonucleotide)m = (deoxyribonucleotide)n+m + AMP + beta-nicotinamide D-nucleotide.. Functionally, DNA ligase that catalyzes the formation of phosphodiester linkages between 5'-phosphoryl and 3'-hydroxyl groups in double-stranded DNA using NAD as a coenzyme and as the energy source for the reaction. It is essential for DNA replication and repair of damaged DNA. The sequence is that of DNA ligase from Chlorobaculum parvum (strain DSM 263 / NCIMB 8327) (Chlorobium vibrioforme subsp. thiosulfatophilum).